The chain runs to 269 residues: Flagellar brake protein YcgR (269 aa).

Positions 1 to 42 are disordered; sequence MLREPMNQHDAPGPAETGADSDAETDAETDAETDAGAADDRY. Positions 19-33 are enriched in acidic residues; the sequence is ADSDAETDAETDAET. The region spanning 149-261 is the PilZ domain; the sequence is QRRRHFRART…MENFLQRLVF (113 aa).

It belongs to the YcgR family. In terms of assembly, monomer. Interacts with the flagellar basal bodies.

Its subcellular location is the bacterial flagellum basal body. In terms of biological role, acts as a flagellar brake, regulating swimming and swarming in a bis-(3'-5') cyclic diguanylic acid (c-di-GMP)-dependent manner. Binds 1 c-di-GMP dimer per subunit. Increasing levels of c-di-GMP lead to decreased motility. The chain is Flagellar brake protein YcgR from Cupriavidus taiwanensis (strain DSM 17343 / BCRC 17206 / CCUG 44338 / CIP 107171 / LMG 19424 / R1) (Ralstonia taiwanensis (strain LMG 19424)).